The following is a 367-amino-acid chain: Female-specific protein transformer (367 aa).

The segment at 86–280 is disordered; that stretch reads ESISSKKIKS…HRHHRSQERS (195 aa). The segment covering 109-129 has biased composition (polar residues); that stretch reads VKQNSPDVTQKFTKKYGSSEN. Positions 130-144 are enriched in basic and acidic residues; the sequence is PDFRRHSSYEKDNYH. The span at 195–223 shows a compositional bias: basic residues; the sequence is NRRRSSHRSRRGSGSPRSRRYTSRHRRRS. Positions 229-238 are enriched in basic and acidic residues; sequence TSWKHNPEHR. The span at 239–257 shows a compositional bias: basic residues; that stretch reads TSRRSRTRSPRGNRSRRRS.

Functionally, sex differentiation protein controlling female somatic sexual differentiation. May act by promoting the formation of a splicing enhancer complex. The polypeptide is Female-specific protein transformer (Musca domestica (House fly)).